Reading from the N-terminus, the 389-residue chain is MLLALAQWLQGDASFLRLFTYLTFRAVMATITALGIGLVCGPWVIRKLTQMKVGQAVRKDGPQSHLVKSGTPTMGGVLILIGIAVATLLWGDLTNRFIWIVMLVTFGFGVIGWVDDYRKVVYKDPRGMSSREKYFWQSVIGLFAAVYLAFSVSEANNVRVFDLFMAWVRSGLSMGLPARADLMLPFLKSISYPLGVWGFIVLTYFVIVGASNAVNLTDGLDGLVIMPVVLVGGSLGVFAYVMGSSVYSKYLLFPHIPGAGELLIFCSAMGGAGLAFLWYNTHPAQVFMGDVGALALGGALGTVAVIVRQEIVLFIMGGIFVAETLSVMLQVSWFKYTKKRYGEGRRLLKMAPLHHHFELSGWKETQVVVRFWIITLMLCLFGLSTLKLR.

10 helical membrane-spanning segments follow: residues 25–45 (RAVMATITALGIGLVCGPWVI), 73–93 (TMGGVLILIGIAVATLLWGDL), 97–117 (FIWIVMLVTFGFGVIGWVDDY), 135–155 (FWQSVIGLFAAVYLAFSVSEA), 190–210 (ISYPLGVWGFIVLTYFVIVGA), 222–242 (GLVIMPVVLVGGSLGVFAYVM), 258–278 (GAGELLIFCSAMGGAGLAFLW), 286–306 (VFMGDVGALALGGALGTVAVI), 311–331 (IVLFIMGGIFVAETLSVMLQV), and 366–386 (QVVVRFWIITLMLCLFGLSTL).

It belongs to the glycosyltransferase 4 family. MraY subfamily. Requires Mg(2+) as cofactor.

It is found in the cell inner membrane. It catalyses the reaction UDP-N-acetyl-alpha-D-muramoyl-L-alanyl-gamma-D-glutamyl-meso-2,6-diaminopimeloyl-D-alanyl-D-alanine + di-trans,octa-cis-undecaprenyl phosphate = di-trans,octa-cis-undecaprenyl diphospho-N-acetyl-alpha-D-muramoyl-L-alanyl-D-glutamyl-meso-2,6-diaminopimeloyl-D-alanyl-D-alanine + UMP. Its pathway is cell wall biogenesis; peptidoglycan biosynthesis. Its function is as follows. Catalyzes the initial step of the lipid cycle reactions in the biosynthesis of the cell wall peptidoglycan: transfers peptidoglycan precursor phospho-MurNAc-pentapeptide from UDP-MurNAc-pentapeptide onto the lipid carrier undecaprenyl phosphate, yielding undecaprenyl-pyrophosphoryl-MurNAc-pentapeptide, known as lipid I. This Burkholderia ambifaria (strain ATCC BAA-244 / DSM 16087 / CCUG 44356 / LMG 19182 / AMMD) (Burkholderia cepacia (strain AMMD)) protein is Phospho-N-acetylmuramoyl-pentapeptide-transferase.